Consider the following 158-residue polypeptide: Cyclic pyranopterin monophosphate synthase (158 aa).

Substrate contacts are provided by residues 75 to 77 (LCH) and 113 to 114 (ME). The active site involves Asp-128.

This sequence belongs to the MoaC family. Homohexamer; trimer of dimers.

It catalyses the reaction (8S)-3',8-cyclo-7,8-dihydroguanosine 5'-triphosphate = cyclic pyranopterin phosphate + diphosphate. It participates in cofactor biosynthesis; molybdopterin biosynthesis. In terms of biological role, catalyzes the conversion of (8S)-3',8-cyclo-7,8-dihydroguanosine 5'-triphosphate to cyclic pyranopterin monophosphate (cPMP). This chain is Cyclic pyranopterin monophosphate synthase, found in Histophilus somni (strain 2336) (Haemophilus somnus).